A 147-amino-acid polypeptide reads, in one-letter code: Large ribosomal subunit protein uL13 (147 aa).

It belongs to the universal ribosomal protein uL13 family. In terms of assembly, part of the 50S ribosomal subunit.

This protein is one of the early assembly proteins of the 50S ribosomal subunit, although it is not seen to bind rRNA by itself. It is important during the early stages of 50S assembly. This chain is Large ribosomal subunit protein uL13, found in Kineococcus radiotolerans (strain ATCC BAA-149 / DSM 14245 / SRS30216).